The following is a 269-amino-acid chain: Protein RKD1 (269 aa).

One can recognise an RWP-RK domain in the interval 106 to 195; that stretch reads TTTTKKRRCR…EKMEGEENED (90 aa). Residues 175 to 216 are a coiled coil; the sequence is LQKLISNVKELEKMEGEENEDKLRNALEKLEKEKKTIEKLPD. The segment at 230-269 is disordered; the sequence is CFKANHKRKRRSGMSTPITSSSSSASASSSSYSSVSGFER. Positions 249 to 269 are enriched in low complexity; that stretch reads SSSSSASASSSSYSSVSGFER.

The protein resides in the nucleus. Its function is as follows. Putative transcription factor. The chain is Protein RKD1 (RKD1) from Arabidopsis thaliana (Mouse-ear cress).